A 198-amino-acid polypeptide reads, in one-letter code: Recombination protein RecR (198 aa).

A C4-type zinc finger spans residues 57 to 72; that stretch reads CQRCNTFSEAELCAIC. Residues 80-175 enclose the Toprim domain; it reads DQLCIVEMPA…TVTRIARGMP (96 aa).

The protein belongs to the RecR family.

Functionally, may play a role in DNA repair. It seems to be involved in an RecBC-independent recombinational process of DNA repair. It may act with RecF and RecO. This Chromobacterium violaceum (strain ATCC 12472 / DSM 30191 / JCM 1249 / CCUG 213 / NBRC 12614 / NCIMB 9131 / NCTC 9757 / MK) protein is Recombination protein RecR.